The chain runs to 196 residues: Oocyte zinc finger protein XlCOF26 (196 aa).

7 C2H2-type zinc fingers span residues 6–28, 34–56, 62–84, 90–112, 118–140, 146–168, and 174–196; these read YSCT…QKNH, FTCT…QRIH, FTCT…HKIH, FTCP…QRTH, FTCT…QSTH, and FTCT…QMTH.

It belongs to the krueppel C2H2-type zinc-finger protein family.

It localises to the nucleus. Its function is as follows. May be involved in transcriptional regulation. This is Oocyte zinc finger protein XlCOF26 from Xenopus laevis (African clawed frog).